We begin with the raw amino-acid sequence, 213 residues long: Ras-related protein Rab-19 (213 aa).

The GTP site is built by serine 24, valine 26, glycine 27, lysine 28, threonine 29, cysteine 30, aspartate 42, and threonine 47. Threonine 29 lines the Mg(2+) pocket. The Switch 1 signature appears at serine 37–phenylalanine 52. 2 residues coordinate Mg(2+): threonine 47 and aspartate 70. The Switch 2 signature appears at alanine 72–serine 87. Positions 73, 128, 129, 131, 159, 160, and 161 each coordinate GTP. 2 S-geranylgeranyl cysteine lipidation sites follow: cysteine 211 and cysteine 213. Cysteine 213 carries the cysteine methyl ester modification.

The protein belongs to the small GTPase superfamily. Rab family. Mg(2+) is required as a cofactor.

Its subcellular location is the cell membrane. The enzyme catalyses GTP + H2O = GDP + phosphate + H(+). Its activity is regulated as follows. Regulated by guanine nucleotide exchange factors (GEFs) which promote the exchange of bound GDP for free GTP. Regulated by GTPase activating proteins (GAPs) which increase the GTP hydrolysis activity. Inhibited by GDP dissociation inhibitors (GDIs). Its function is as follows. The small GTPases Rab are key regulators of intracellular membrane trafficking, from the formation of transport vesicles to their fusion with membranes. Rabs cycle between an inactive GDP-bound form and an active GTP-bound form that is able to recruit to membranes different set of downstream effectors directly responsible for vesicle formation, movement, tethering and fusion. The chain is Ras-related protein Rab-19 (rab19) from Xenopus laevis (African clawed frog).